The primary structure comprises 436 residues: GTPase Der (436 aa).

2 EngA-type G domains span residues 4–167 and 175–351; these read PTVA…PVEE and IRFS…ESQN. GTP-binding positions include 10–17, 57–61, 119–122, 181–188, 229–233, and 294–297; these read GRPNVGKS, DTGGI, NKVD, DTAGM, and NKWD. Residues 352 to 436 form the KH-like domain; that stretch reads KRIPSAVLND…PIHLIARKRK (85 aa).

Belongs to the TRAFAC class TrmE-Era-EngA-EngB-Septin-like GTPase superfamily. EngA (Der) GTPase family. Associates with the 50S ribosomal subunit.

In terms of biological role, GTPase that plays an essential role in the late steps of ribosome biogenesis. The polypeptide is GTPase Der (Streptococcus pyogenes serotype M3 (strain ATCC BAA-595 / MGAS315)).